The following is a 398-amino-acid chain: MTYNKRLFTSESVTEGHPDKIADQVSDAILDEILKDDPNARVACETTVTTGMALISGEISTTTYVDIPKVVRETIKEIGYTRAKFGYDSQTMAVLTAIDEQSPDIAQGVDTALEYRDEASEAEIEATGAGDQGLMFGYATNETDTYMPLPIFLSHQLAKRLSDVRKDEILKYLRPDGKVQVTVEYDEQDKPVRIDTIVLSTQHAEDIELDQIKDDIKTHVIYPTVPESLLDEQTKFYINPTGRFVIGGPQGDAGLTGRKIIVDTYGGYARHGGGCFSGKDPTKVDRSAAYAARYVAKNIVAAQLAEKCEVQLAYAIGVAEPVSISIDTFGTGKVSEYELVEAVRKHFDLRPAGIIKMLDLKHPIYKQTAAYGHFGRTDVLLPWEKLDKVNLLKDSVKA.

Position 17 (His-17) interacts with ATP. Residue Asp-19 participates in Mg(2+) binding. A K(+)-binding site is contributed by Glu-45. Residues Glu-58 and Gln-101 each coordinate L-methionine. Residues 101-111 form a flexible loop region; the sequence is QSPDIAQGVDT. ATP is bound by residues 176–178, 243–244, Asp-252, 258–259, and Lys-279; these read DGK, RF, and RK. Asp-252 lines the L-methionine pocket. An L-methionine-binding site is contributed by Lys-283.

This sequence belongs to the AdoMet synthase family. As to quaternary structure, homotetramer; dimer of dimers. The cofactor is Mg(2+). Requires K(+) as cofactor.

It localises to the cytoplasm. It carries out the reaction L-methionine + ATP + H2O = S-adenosyl-L-methionine + phosphate + diphosphate. It participates in amino-acid biosynthesis; S-adenosyl-L-methionine biosynthesis; S-adenosyl-L-methionine from L-methionine: step 1/1. Catalyzes the formation of S-adenosylmethionine (AdoMet) from methionine and ATP. The overall synthetic reaction is composed of two sequential steps, AdoMet formation and the subsequent tripolyphosphate hydrolysis which occurs prior to release of AdoMet from the enzyme. The protein is S-adenosylmethionine synthase of Staphylococcus saprophyticus subsp. saprophyticus (strain ATCC 15305 / DSM 20229 / NCIMB 8711 / NCTC 7292 / S-41).